The primary structure comprises 326 residues: Peroxidase 43 (326 aa).

The N-terminal stretch at 1 to 24 (MVWANAKMRLALSLVTVFFGISLA) is a signal peptide. Cystine bridges form between Cys-35–Cys-112, Cys-68–Cys-73, Cys-118–Cys-322, and Cys-196–Cys-228. His-66 serves as the catalytic Proton acceptor. Ca(2+) contacts are provided by Asp-67, Val-70, Gly-72, Asp-74, and Ser-76. Asn-151 carries N-linked (GlcNAc...) asparagine glycosylation. Pro-159 is a substrate binding site. His-189 serves as a coordination point for heme b. Thr-190 provides a ligand contact to Ca(2+). Asp-241, Ser-244, and Asp-249 together coordinate Ca(2+).

The protein belongs to the peroxidase family. Classical plant (class III) peroxidase subfamily. Heme b serves as cofactor. It depends on Ca(2+) as a cofactor.

The protein localises to the secreted. It catalyses the reaction 2 a phenolic donor + H2O2 = 2 a phenolic radical donor + 2 H2O. Its function is as follows. Removal of H(2)O(2), oxidation of toxic reductants, biosynthesis and degradation of lignin, suberization, auxin catabolism, response to environmental stresses such as wounding, pathogen attack and oxidative stress. These functions might be dependent on each isozyme/isoform in each plant tissue. This chain is Peroxidase 43 (PER43), found in Arabidopsis thaliana (Mouse-ear cress).